A 202-amino-acid polypeptide reads, in one-letter code: Dephospho-CoA kinase (202 aa).

The DPCK domain occupies Val4 to Gln200. Gly12–Ala17 contacts ATP.

Belongs to the CoaE family.

It localises to the cytoplasm. The enzyme catalyses 3'-dephospho-CoA + ATP = ADP + CoA + H(+). It participates in cofactor biosynthesis; coenzyme A biosynthesis; CoA from (R)-pantothenate: step 5/5. Catalyzes the phosphorylation of the 3'-hydroxyl group of dephosphocoenzyme A to form coenzyme A. This Idiomarina loihiensis (strain ATCC BAA-735 / DSM 15497 / L2-TR) protein is Dephospho-CoA kinase.